The following is a 90-amino-acid chain: Probable Fe(2+)-trafficking protein (90 aa).

This sequence belongs to the Fe(2+)-trafficking protein family.

In terms of biological role, could be a mediator in iron transactions between iron acquisition and iron-requiring processes, such as synthesis and/or repair of Fe-S clusters in biosynthetic enzymes. In Hydrogenovibrio crunogenus (strain DSM 25203 / XCL-2) (Thiomicrospira crunogena), this protein is Probable Fe(2+)-trafficking protein.